Here is a 146-residue protein sequence, read N- to C-terminus: Putative actin-depolymerizing factor 8 (146 aa).

In terms of domain architecture, ADF-H spans Pro14–Asn144.

Belongs to the actin-binding proteins ADF family.

Functionally, actin-depolymerizing protein. Severs actin filaments (F-actin) and binds to actin monomers. In Oryza sativa subsp. japonica (Rice), this protein is Putative actin-depolymerizing factor 8 (ADF8).